A 275-amino-acid chain; its full sequence is Vitamin B12-binding protein (275 aa).

Positions 1 to 27 (MKWIKSTGSIGLSLLLFLSSFSHSLYA) are cleaved as a signal peptide. The Fe/B12 periplasmic-binding domain maps to 31-275 (RVISLSPSTT…LCQQLNDNGS (245 aa)). Tyrosine 58 serves as a coordination point for cyanocob(III)alamin. A disulfide bridge connects residues cysteine 191 and cysteine 267.

This sequence belongs to the BtuF family. As to quaternary structure, the complex is composed of two ATP-binding proteins (BtuD), two transmembrane proteins (BtuC) and a solute-binding protein (BtuF).

It localises to the periplasm. In terms of biological role, part of the ABC transporter complex BtuCDF involved in vitamin B12 import. Binds vitamin B12 and delivers it to the periplasmic surface of BtuC. The protein is Vitamin B12-binding protein of Photorhabdus laumondii subsp. laumondii (strain DSM 15139 / CIP 105565 / TT01) (Photorhabdus luminescens subsp. laumondii).